We begin with the raw amino-acid sequence, 952 residues long: Isoleucine--tRNA ligase (952 aa).

The 'HIGH' region signature appears at 58-68; the sequence is PYANGDIHIGH. Glutamate 576 provides a ligand contact to L-isoleucyl-5'-AMP. The short motif at 617–621 is the 'KMSKS' region element; that stretch reads KMSKS. Lysine 620 is an ATP binding site. The Zn(2+) site is built by cysteine 915, cysteine 918, cysteine 935, and cysteine 938.

The protein belongs to the class-I aminoacyl-tRNA synthetase family. IleS type 1 subfamily. Monomer. Requires Zn(2+) as cofactor.

Its subcellular location is the cytoplasm. The catalysed reaction is tRNA(Ile) + L-isoleucine + ATP = L-isoleucyl-tRNA(Ile) + AMP + diphosphate. Functionally, catalyzes the attachment of isoleucine to tRNA(Ile). As IleRS can inadvertently accommodate and process structurally similar amino acids such as valine, to avoid such errors it has two additional distinct tRNA(Ile)-dependent editing activities. One activity is designated as 'pretransfer' editing and involves the hydrolysis of activated Val-AMP. The other activity is designated 'posttransfer' editing and involves deacylation of mischarged Val-tRNA(Ile). The sequence is that of Isoleucine--tRNA ligase from Aliivibrio fischeri (strain MJ11) (Vibrio fischeri).